A 98-amino-acid chain; its full sequence is Large ribosomal subunit protein uL23 (98 aa).

This sequence belongs to the universal ribosomal protein uL23 family. Part of the 50S ribosomal subunit. Contacts protein L29, and trigger factor when it is bound to the ribosome.

Its function is as follows. One of the early assembly proteins it binds 23S rRNA. One of the proteins that surrounds the polypeptide exit tunnel on the outside of the ribosome. Forms the main docking site for trigger factor binding to the ribosome. The chain is Large ribosomal subunit protein uL23 from Clostridium beijerinckii (strain ATCC 51743 / NCIMB 8052) (Clostridium acetobutylicum).